The following is a 1084-amino-acid chain: Putative tRNA-specific 2-thiouridylase (1084 aa).

3 helical membrane passes run 1–21 (MLIF…FILT), 32–52 (FIIS…FYVI), and 309–329 (IITI…YLIL). Cys-538 (nucleophile) is an active-site residue. An intrachain disulfide couples Cys-538 to Cys-715. The active-site Cysteine persulfide intermediate is Cys-715.

It belongs to the MnmA/TRMU family.

Its subcellular location is the plastid. It is found in the apicoplast. It localises to the membrane. It catalyses the reaction S-sulfanyl-L-cysteinyl-[protein] + uridine(34) in tRNA + AH2 + ATP = 2-thiouridine(34) in tRNA + L-cysteinyl-[protein] + A + AMP + diphosphate + H(+). Its function is as follows. Catalyzes the 2-thiolation of uridine at the wobble position (U34) of tRNA, leading to the formation of s(2)U34. Required for apicoplast maintenance. The sequence is that of Putative tRNA-specific 2-thiouridylase from Plasmodium falciparum (isolate 3D7).